Reading from the N-terminus, the 92-residue chain is DNA-directed RNA polymerase subunit omega (92 aa).

Belongs to the RNA polymerase subunit omega family. As to quaternary structure, the RNAP catalytic core consists of 2 alpha, 1 beta, 1 beta' and 1 omega subunit. When a sigma factor is associated with the core the holoenzyme is formed, which can initiate transcription.

The enzyme catalyses RNA(n) + a ribonucleoside 5'-triphosphate = RNA(n+1) + diphosphate. In terms of biological role, promotes RNA polymerase assembly. Latches the N- and C-terminal regions of the beta' subunit thereby facilitating its interaction with the beta and alpha subunits. The polypeptide is DNA-directed RNA polymerase subunit omega (Shewanella sp. (strain ANA-3)).